We begin with the raw amino-acid sequence, 315 residues long: S-methyl-5'-thioadenosine phosphorylase (315 aa).

Phosphate contacts are provided by residues serine 22, 65 to 66 (RH), and 98 to 99 (SA). Substrate is bound at residue methionine 205. Position 206 (serine 206) interacts with phosphate. 229 to 231 (DYD) contacts substrate.

Belongs to the PNP/MTAP phosphorylase family. MTAP subfamily. Homotrimer.

The protein localises to the cytoplasm. The protein resides in the nucleus. It carries out the reaction S-methyl-5'-thioadenosine + phosphate = 5-(methylsulfanyl)-alpha-D-ribose 1-phosphate + adenine. It participates in amino-acid biosynthesis; L-methionine biosynthesis via salvage pathway; S-methyl-5-thio-alpha-D-ribose 1-phosphate from S-methyl-5'-thioadenosine (phosphorylase route): step 1/1. Catalyzes the reversible phosphorylation of S-methyl-5'-thioadenosine (MTA) to adenine and 5-methylthioribose-1-phosphate. Involved in the breakdown of MTA, a major by-product of polyamine biosynthesis. Responsible for the first step in the methionine salvage pathway after MTA has been generated from S-adenosylmethionine. Has broad substrate specificity with 6-aminopurine nucleosides as preferred substrates. The sequence is that of S-methyl-5'-thioadenosine phosphorylase from Mycosarcoma maydis (Corn smut fungus).